The primary structure comprises 1052 residues: RIMS-binding protein 2 (1052 aa).

A disordered region spans residues 115–164 (GEYIRPLPQPGDRPEPLSAKPTFLSRSGSARCRSESDMENERNSNTSKQR). Over residues 146-156 (CRSESDMENER) the composition is skewed to basic and acidic residues. The region spanning 167-234 (GKVHLCVARY…PSNFVDFVQD (68 aa)) is the SH3 1 domain. 3 consecutive Fibronectin type-III domains span residues 297–390 (VPYP…GKDV), 393–475 (APSH…KKEA), and 489–590 (PPQD…VPPT). Disordered stretches follow at residues 584–615 (ELLV…DEHL), 629–666 (RAPG…PVST), 697–716 (SAGQ…PDFK), 767–787 (EMQL…NALK), and 805–829 (FPRG…YGRD). Residues 585–598 (LLVPPTPHPRPAPQ) are compositionally biased toward pro residues. Residues 645–654 (PGRRSPSPSR) are compositionally biased toward low complexity. Phosphoserine occurs at positions 704 and 712. Phosphoserine is present on residues serine 832 and serine 839. Phosphothreonine is present on threonine 841. SH3 domains follow at residues 848–916 (LPAR…EIQA) and 952–1019 (VSTR…EVPD). The segment at 1029 to 1052 (PSHYSQDTPMRSKAKRKKSVHFTP) is disordered. Residues 1040–1052 (SKAKRKKSVHFTP) show a composition bias toward basic residues.

Belongs to the RIMBP family. As to quaternary structure, interacts with RIMS1, RIMS2, CACNA1D and CACNA1B, and potentially with other Ca(2+) channel alpha-1 isoforms.

It localises to the cell membrane. The protein resides in the synapse. Plays a role in the synaptic transmission as bifunctional linker that interacts simultaneously with RIMS1, RIMS2, CACNA1D and CACNA1B. The protein is RIMS-binding protein 2 (RIMBP2) of Homo sapiens (Human).